A 764-amino-acid polypeptide reads, in one-letter code: 5-methyltetrahydropteroyltriglutamate--homocysteine methyltransferase (764 aa).

5-methyltetrahydropteroyltri-L-glutamate is bound by residues 16 to 19 (RELK) and lysine 112. Residues 431–433 (IGS) and glutamate 484 each bind L-homocysteine. L-methionine contacts are provided by residues 431–433 (IGS) and glutamate 484. Residues 515-516 (RC) and tryptophan 561 each bind 5-methyltetrahydropteroyltri-L-glutamate. Aspartate 599 contributes to the L-homocysteine binding site. Aspartate 599 is a binding site for L-methionine. Glutamate 605 lines the 5-methyltetrahydropteroyltri-L-glutamate pocket. Zn(2+) is bound by residues histidine 641, cysteine 643, and glutamate 665. Histidine 694 serves as the catalytic Proton donor. Position 726 (cysteine 726) interacts with Zn(2+).

Belongs to the vitamin-B12 independent methionine synthase family. Zn(2+) is required as a cofactor.

It carries out the reaction 5-methyltetrahydropteroyltri-L-glutamate + L-homocysteine = tetrahydropteroyltri-L-glutamate + L-methionine. It functions in the pathway amino-acid biosynthesis; L-methionine biosynthesis via de novo pathway; L-methionine from L-homocysteine (MetE route): step 1/1. Catalyzes the transfer of a methyl group from 5-methyltetrahydrofolate to homocysteine resulting in methionine formation. The polypeptide is 5-methyltetrahydropteroyltriglutamate--homocysteine methyltransferase (Paraburkholderia phytofirmans (strain DSM 17436 / LMG 22146 / PsJN) (Burkholderia phytofirmans)).